Here is a 984-residue protein sequence, read N- to C-terminus: Putative formate dehydrogenase SA2102 (984 aa).

Positions 3–79 (EHLVVTLDGK…PMTVNTVNND (77 aa)) constitute a 2Fe-2S ferredoxin-type domain. Cysteine 37, cysteine 48, cysteine 51, and cysteine 63 together coordinate [2Fe-2S] cluster. The region spanning 79–119 (DVKDAQKEALDRILEKHMLYCTVCDYNNGDCEIHNTMDAWG) is the 4Fe-4S His(Cys)3-ligated-type domain. 16 residues coordinate [4Fe-4S] cluster: histidine 95, cysteine 99, cysteine 102, cysteine 109, cysteine 147, cysteine 150, cysteine 153, cysteine 157, cysteine 190, cysteine 193, cysteine 196, cysteine 200, cysteine 264, cysteine 267, cysteine 271, and cysteine 299. 2 consecutive 4Fe-4S ferredoxin-type domains span residues 138-165 (PFYR…VNET) and 181-211 (NDVP…VNME). Residues 252-984 (MRKERIKKTK…YVFPGNQVDK (733 aa)) are formate dehydrogenase. One can recognise a 4Fe-4S Mo/W bis-MGD-type domain in the interval 257 to 313 (IKKTKTVCTYCGVGCSFEVWTKDREILKVQPSHDSPANKIATCVKGKFSWGHINSDQ).

The protein in the C-terminal section; belongs to the prokaryotic molybdopterin-containing oxidoreductase family. It depends on [2Fe-2S] cluster as a cofactor. [4Fe-4S] cluster is required as a cofactor. The cofactor is Mo-bis(molybdopterin guanine dinucleotide).

The enzyme catalyses formate + NAD(+) = CO2 + NADH. The chain is Putative formate dehydrogenase SA2102 from Staphylococcus aureus (strain N315).